The chain runs to 443 residues: UDP-N-acetylmuramate--L-alanine ligase (443 aa).

An ATP-binding site is contributed by 110–116 (GAHGKTS).

It belongs to the MurCDEF family.

Its subcellular location is the cytoplasm. It carries out the reaction UDP-N-acetyl-alpha-D-muramate + L-alanine + ATP = UDP-N-acetyl-alpha-D-muramoyl-L-alanine + ADP + phosphate + H(+). Its pathway is cell wall biogenesis; peptidoglycan biosynthesis. Cell wall formation. The chain is UDP-N-acetylmuramate--L-alanine ligase from Streptococcus agalactiae serotype III (strain NEM316).